A 257-amino-acid polypeptide reads, in one-letter code: UPF0246 protein Spro_0686 (257 aa).

This sequence belongs to the UPF0246 family.

This chain is UPF0246 protein Spro_0686, found in Serratia proteamaculans (strain 568).